The sequence spans 1038 residues: Rap guanine nucleotide exchange factor 1 (1038 aa).

10 to 140 (RLSPLHTFSD…DILTDETPSD (131 aa)) provides a ligand contact to a nucleoside 3',5'-cyclic phosphate. Residues 234–316 (TDNHQVIRDI…KTNSYYRWVQ (83 aa)) form the DEP domain. 375-492 (ALSHLSTMVK…VRLKDYGEDV (118 aa)) is a binding site for a nucleoside 3',5'-cyclic phosphate. Residues 516 to 654 (CGYSVMAGKA…DILTRIGSIR (139 aa)) enclose the N-terminal Ras-GEF domain. Residues 795 to 1028 (DSQELAHQLF…MQLSYEIEPK (234 aa)) enclose the Ras-GEF domain.

Interacts (via C-terminus) with drn-1. In terms of tissue distribution, expressed specifically in neurons including the nerve ring, ventral and dorsal nerve cord motor neurons and tail ganglia.

Its function is as follows. Guanine nucleotide-releasing protein. Together with GTPase drn-1, may regulate acetylcholine release at the neuromuscular junctions probably downstream of G-protein gsa-1 and adenylate cyclase acy-1. This Caenorhabditis elegans protein is Rap guanine nucleotide exchange factor 1 (epac-1).